Reading from the N-terminus, the 130-residue chain is Small ribosomal subunit protein uS9 (130 aa).

This sequence belongs to the universal ribosomal protein uS9 family.

This is Small ribosomal subunit protein uS9 from Blochmanniella floridana.